The chain runs to 58 residues: Potassium channel toxin alpha-KTx BmKcug1a (58 aa).

An N-terminal signal peptide occupies residues 1–21 (MKISFLLLLAIVICSIGWTEA). Gln22 carries the post-translational modification Pyrrolidone carboxylic acid. Intrachain disulfides connect Cys28/Cys49, Cys34/Cys54, and Cys38/Cys56.

The protein belongs to the short scorpion toxin superfamily. Potassium channel inhibitor family. Alpha-KTx 01 subfamily. In terms of tissue distribution, expressed by the venom gland.

Its subcellular location is the secreted. Its function is as follows. Potent blocker of both large-conductance calcium-activated potassium channels (KCa1.1/KCNMA1) and voltage-gated potassium channels (Kv1.3/KCNA3 and ERG1/Kv11.1/KCNH2). This Olivierus martensii (Manchurian scorpion) protein is Potassium channel toxin alpha-KTx BmKcug1a.